A 292-amino-acid chain; its full sequence is tRNA-splicing endonuclease (292 aa).

Residues Tyr-231, His-238, and Lys-267 contribute to the active site.

Belongs to the tRNA-intron endonuclease family. Archaeal long subfamily. As to quaternary structure, homodimer.

The catalysed reaction is pretRNA = a 3'-half-tRNA molecule with a 5'-OH end + a 5'-half-tRNA molecule with a 2',3'-cyclic phosphate end + an intron with a 2',3'-cyclic phosphate and a 5'-hydroxyl terminus.. In terms of biological role, endonuclease that removes tRNA introns. Cleaves pre-tRNA at the 5'- and 3'-splice sites to release the intron. The products are an intron and two tRNA half-molecules bearing 2',3' cyclic phosphate and 5'-OH termini. Recognizes a pseudosymmetric substrate in which 2 bulged loops of 3 bases are separated by a stem of 4 bp. The protein is tRNA-splicing endonuclease of Thermoplasma volcanium (strain ATCC 51530 / DSM 4299 / JCM 9571 / NBRC 15438 / GSS1).